The sequence spans 641 residues: Bifunctional protein glk (641 aa).

Residues 1-21 (MSTGAQTKAAEASQHADGPRL) form a disordered region. The interval 1–340 (MSTGAQTKAA…QLSNRTGGAS (340 aa)) is glucokinase. 23–28 (ADVGGT) serves as a coordination point for ATP. The 77-residue stretch at 341–417 (SAVFERIRQM…LKLATGLTGT (77 aa)) folds into the HTH rpiR-type domain. The segment at 341 to 641 (SAVFERIRQM…SHGAAPAAKE (301 aa)) is putative HTH-type transcriptional regulator. Residues 377-396 (IVDIARKADVSQPTVIRFCR) constitute a DNA-binding region (H-T-H motif). The 140-residue stretch at 461–600 (AIDILNNARR…AVGVAIRRAS (140 aa)) folds into the SIS domain. A helical membrane pass occupies residues 576–596 (SMISRILHLVMIDILAVGVAI).

It in the N-terminal section; belongs to the bacterial glucokinase family.

It localises to the membrane. It catalyses the reaction D-glucose + ATP = D-glucose 6-phosphate + ADP + H(+). The sequence is that of Bifunctional protein glk (glk) from Burkholderia thailandensis (strain ATCC 700388 / DSM 13276 / CCUG 48851 / CIP 106301 / E264).